A 392-amino-acid polypeptide reads, in one-letter code: Aspartate aminotransferase (392 aa).

Residues glycine 40, tryptophan 126, and asparagine 176 each coordinate L-aspartate. Lysine 239 bears the N6-(pyridoxal phosphate)lysine mark.

This sequence belongs to the class-I pyridoxal-phosphate-dependent aminotransferase family. In terms of assembly, homodimer. Requires pyridoxal 5'-phosphate as cofactor.

The protein localises to the cytoplasm. It catalyses the reaction L-aspartate + 2-oxoglutarate = oxaloacetate + L-glutamate. The protein is Aspartate aminotransferase of Bacillus sp. (strain YM-2).